We begin with the raw amino-acid sequence, 885 residues long: Insulin receptor substrate 1-A (885 aa).

An IRS-type PTB domain is found at 1–56 (MNIRRCGHSENFFFIEVGRSAVTGAGEFWMQVDDSVVAQNMHETILEAMKALSDEF). A disordered region spans residues 56 to 225 (FRPRSKSQSS…GGFISSDEYG (170 aa)). 4 stretches are compositionally biased toward low complexity: residues 61–75 (KSQSSSNCSNPISVP), 99–109 (SATATSPAGGA), 176–197 (SPSATSPVSLSSSSTSGHGSTS), and 205–217 (SSASISGSPSDGG). At S104 the chain carries Phosphoserine. Residue Y257 is modified to Phosphotyrosine; by INSR. The YXXM motif 1 signature appears at 257–260 (YICM). Composition is skewed to polar residues over residues 263 to 276 (SSSHLQRGPQQRYQ) and 296 to 313 (SSGTSPPTVSHQKTPSQS). Disordered stretches follow at residues 263–282 (SSSHLQRGPQQRYQPSRGEE) and 293–313 (RTHSSGTSPPTVSHQKTPSQS). 5 short sequence motifs (YXXM motif) span residues 318–321 (YTEM), 364–367 (YMPM), 381–384 (YMPM), 409–412 (YMMM), and 451–454 (YINM). Phosphotyrosine; by INSR occurs at positions 364 and 381. The residue at position 409 (Y409) is a Phosphotyrosine. Residues 501–581 (NLRISANSGH…LPPEPKSPGE (81 aa)) are disordered. A compositionally biased stretch (polar residues) spans 504–515 (ISANSGHNLYTE). The segment covering 516-526 (DSSSSSTSSDS) has biased composition (low complexity). A phosphotyrosine; by INSR mark is found at Y582 and Y620. The segment at 582 to 584 (YVN) is GRB2-binding. The YXXM motif 7 motif lies at 620-623 (YMNM). Over residues 637 to 660 (TSSYEPPNKPVNSVCPTETCSSSR) the composition is skewed to polar residues. The tract at residues 637–665 (TSSYEPPNKPVNSVCPTETCSSSRPPIRG) is disordered. Y672 carries the post-translational modification Phosphotyrosine; by INSR. 2 consecutive short sequence motifs (YXXM motif) follow at residues 672-675 (YMSM) and 706-709 (YAEM). Residues 732-803 (ASRSSLLGQG…SGEDVKRHSS (72 aa)) form a disordered region. Composition is skewed to polar residues over residues 743 to 758 (GPSAFTRVSLSPNRNP) and 777 to 792 (ETFSSTPTTARVTTGP). 2 positions are modified to phosphotyrosine; by INSR: Y834 and Y866.

As to quaternary structure, interacts with the NPXY motif of tyrosine-phosphorylated igf1r and insr via the PTB domain. Binds to phosphatidylinositol 3-kinase p85 subunit at a low level in vitro prior to phosphorylation. Binding is greatly enhanced following tyrosine phosphorylation by insr and probably occurs via the phosphorylated YXXM motifs. Phosphorylation of Tyr-582 is required for grb2-binding.

May mediate the control of various cellular processes by insulin. When phosphorylated by the insulin receptor binds specifically to various cellular proteins containing SH2 domains such as phosphatidylinositol 3-kinase p85 subunit or grb2. Activates phosphatidylinositol 3-kinase when bound to the regulatory p85 subunit. The polypeptide is Insulin receptor substrate 1-A (irs1-a) (Xenopus laevis (African clawed frog)).